The primary structure comprises 271 residues: Na(+), Li(+), K(+)/H(+) antiporter subunit B (271 aa).

The next 7 membrane-spanning stretches (helical) occupy residues 2-22 (ILLT…AIIF), 36-56 (LPQV…FLVG), 94-114 (WVYL…PSLI), 130-150 (PFML…LGTW), 152-172 (IVMG…VIIQ), 193-213 (STIT…SIPG), and 216-236 (ALMD…ITVM). Residues 252–271 (TPHLSYSKAPPPSKGDNNAL) are disordered.

The protein belongs to the UmpA/UmpB family. In terms of assembly, heterodimer composed of UmpA and UmpB.

The protein localises to the cell membrane. Part of a two-component antiporter that catalyzes the efflux of Na(+), Li(+) and K(+) in exchange for external protons. Shows a preference for Na(+), followed by K(+) and Li(+). The protein is Na(+), Li(+), K(+)/H(+) antiporter subunit B of Vreelandella zhaodongensis (Halomonas zhaodongensis).